Consider the following 293-residue polypeptide: Homoserine kinase (293 aa).

ATP is bound at residue 80–90 (RPASGLGSSAA).

This sequence belongs to the GHMP kinase family. Homoserine kinase subfamily.

The protein localises to the cytoplasm. The catalysed reaction is L-homoserine + ATP = O-phospho-L-homoserine + ADP + H(+). The protein operates within amino-acid biosynthesis; L-threonine biosynthesis; L-threonine from L-aspartate: step 4/5. Catalyzes the ATP-dependent phosphorylation of L-homoserine to L-homoserine phosphate. The polypeptide is Homoserine kinase (Halorubrum lacusprofundi (strain ATCC 49239 / DSM 5036 / JCM 8891 / ACAM 34)).